The primary structure comprises 466 residues: Asparagine--tRNA ligase (466 aa).

The protein belongs to the class-II aminoacyl-tRNA synthetase family. In terms of assembly, homodimer.

It is found in the cytoplasm. The catalysed reaction is tRNA(Asn) + L-asparagine + ATP = L-asparaginyl-tRNA(Asn) + AMP + diphosphate + H(+). This Shewanella halifaxensis (strain HAW-EB4) protein is Asparagine--tRNA ligase.